The chain runs to 239 residues: Lipoprotein-releasing system ATP-binding protein LolD (239 aa).

Residues 10-239 (VELSGVRKDY…ADGPHRRSGA (230 aa)) enclose the ABC transporter domain. Residue 46-53 (GPSGSGKS) coordinates ATP.

Belongs to the ABC transporter superfamily. Lipoprotein translocase (TC 3.A.1.125) family. In terms of assembly, the complex is composed of two ATP-binding proteins (LolD) and two transmembrane proteins (LolC and LolE).

It localises to the cell inner membrane. Part of the ABC transporter complex LolCDE involved in the translocation of mature outer membrane-directed lipoproteins, from the inner membrane to the periplasmic chaperone, LolA. Responsible for the formation of the LolA-lipoprotein complex in an ATP-dependent manner. In Anaeromyxobacter dehalogenans (strain 2CP-C), this protein is Lipoprotein-releasing system ATP-binding protein LolD.